We begin with the raw amino-acid sequence, 326 residues long: GDP-mannose transporter (326 aa).

The Cytoplasmic segment spans residues 1–4 (MEKS). The helical transmembrane segment at 5 to 25 (ITNSPVLSILSYCAASILMTV) threads the bilayer. At 26 to 35 (TNKYVLSGTS) the chain is on the lumenal side. A helical transmembrane segment spans residues 36–56 (FNLNLALLAVQSIVCLTAISI). Residues 57 to 74 (GKSFGLCKFRSFNADEAK) are Cytoplasmic-facing. A helical transmembrane segment spans residues 75–97 (KWFPIALLLVVMIYTSSKALQFL). Topologically, residues 98–100 (SIP) are lumenal. A helical membrane pass occupies residues 101 to 123 (VYTIFKNLTIILIAYGEVLWFGG). At 124–129 (SVTSMA) the chain is on the cytoplasmic side. Residues 130–152 (LASFVLMVLSSVIAAWSDISGAI) traverse the membrane as a helical segment. Over 153–163 (AVSGSATTTVT) the chain is Lumenal. Residues 164 to 184 (ALNIGYFWMMSNCFASAAFVL) traverse the membrane as a helical segment. At 185-208 (YMRKRIKLTNFGDFDTTFYNNLLS) the chain is on the cytoplasmic side. A helical membrane pass occupies residues 209–229 (IPVLLIASLLFEDWSPANLAV). The Lumenal segment spans residues 230-237 (NFPPESRN). Residues 238–258 (LIFFSMVVSGLMSIGISYCSA) form a helical membrane-spanning segment. Topologically, residues 259-268 (WCVRVTSSTT) are cytoplasmic. The helical transmembrane segment at 269 to 289 (YSMVGALNKLPLALSGIVFFG) threads the bilayer. Residues 290–291 (TP) are Lumenal-facing. A helical transmembrane segment spans residues 292–312 (ATFSSVSAIFVGFVAGIVYAV). Residues 313-326 (AQIQKKKAEAALPK) are Cytoplasmic-facing.

This sequence belongs to the TPT transporter family. SLC35D subfamily. As to quaternary structure, homooligomer.

The protein resides in the golgi apparatus membrane. Its subcellular location is the cytoplasmic vesicle membrane. It localises to the endoplasmic reticulum membrane. Involved in the import of GDP-mannose from the cytoplasm into the Golgi lumen. This chain is GDP-mannose transporter (VRG4), found in Yarrowia lipolytica (strain CLIB 122 / E 150) (Yeast).